Reading from the N-terminus, the 591-residue chain is Aspartate--tRNA(Asp/Asn) ligase (591 aa).

Glutamate 174 contacts L-aspartate. Positions 198–201 are aspartate; it reads QLFK. An L-aspartate-binding site is contributed by arginine 220. Residues 220-222 and glutamine 229 each bind ATP; that span reads RDE. Position 450 (histidine 450) interacts with L-aspartate. Glutamate 483 contacts ATP. An L-aspartate-binding site is contributed by arginine 490. 535-538 is a binding site for ATP; sequence GLDR.

It belongs to the class-II aminoacyl-tRNA synthetase family. Type 1 subfamily. Homodimer.

The protein resides in the cytoplasm. The catalysed reaction is tRNA(Asx) + L-aspartate + ATP = L-aspartyl-tRNA(Asx) + AMP + diphosphate. Functionally, aspartyl-tRNA synthetase with relaxed tRNA specificity since it is able to aspartylate not only its cognate tRNA(Asp) but also tRNA(Asn). Reaction proceeds in two steps: L-aspartate is first activated by ATP to form Asp-AMP and then transferred to the acceptor end of tRNA(Asp/Asn). The chain is Aspartate--tRNA(Asp/Asn) ligase from Pseudomonas fluorescens (strain ATCC BAA-477 / NRRL B-23932 / Pf-5).